Consider the following 308-residue polypeptide: D-alanine--D-alanine ligase (308 aa).

Residues 102 to 302 (KKVAAAAGIP…FGDLVSWMVE (201 aa)) enclose the ATP-grasp domain. Position 128–183 (128–183 (PLQPPYVVKPVREGSSFGVVIVKEDQSHPPQILTSSEWPFGNQVMVERYIHGRELT)) interacts with ATP. Residues D252, E269, and N271 each coordinate Mg(2+).

It belongs to the D-alanine--D-alanine ligase family. It depends on Mg(2+) as a cofactor. Requires Mn(2+) as cofactor.

The protein resides in the cytoplasm. The enzyme catalyses 2 D-alanine + ATP = D-alanyl-D-alanine + ADP + phosphate + H(+). It participates in cell wall biogenesis; peptidoglycan biosynthesis. Its function is as follows. Cell wall formation. The protein is D-alanine--D-alanine ligase of Agrobacterium fabrum (strain C58 / ATCC 33970) (Agrobacterium tumefaciens (strain C58)).